The primary structure comprises 485 residues: Protein nucleotidyltransferase YdiU (485 aa).

ATP-binding residues include G90, G92, R93, K113, D125, G126, R176, and R183. The active-site Proton acceptor is D252. Mg(2+) contacts are provided by N253 and D262. D262 contacts ATP.

It belongs to the SELO family. Requires Mg(2+) as cofactor. Mn(2+) serves as cofactor.

It catalyses the reaction L-seryl-[protein] + ATP = 3-O-(5'-adenylyl)-L-seryl-[protein] + diphosphate. It carries out the reaction L-threonyl-[protein] + ATP = 3-O-(5'-adenylyl)-L-threonyl-[protein] + diphosphate. The enzyme catalyses L-tyrosyl-[protein] + ATP = O-(5'-adenylyl)-L-tyrosyl-[protein] + diphosphate. The catalysed reaction is L-histidyl-[protein] + UTP = N(tele)-(5'-uridylyl)-L-histidyl-[protein] + diphosphate. It catalyses the reaction L-seryl-[protein] + UTP = O-(5'-uridylyl)-L-seryl-[protein] + diphosphate. It carries out the reaction L-tyrosyl-[protein] + UTP = O-(5'-uridylyl)-L-tyrosyl-[protein] + diphosphate. Nucleotidyltransferase involved in the post-translational modification of proteins. It can catalyze the addition of adenosine monophosphate (AMP) or uridine monophosphate (UMP) to a protein, resulting in modifications known as AMPylation and UMPylation. The chain is Protein nucleotidyltransferase YdiU from Vibrio atlanticus (strain LGP32) (Vibrio splendidus (strain Mel32)).